Reading from the N-terminus, the 175-residue chain is uncharacterized protein (175 aa).

The next 5 helical transmembrane spans lie at 25–45, 46–66, 97–117, 124–144, and 155–175; these read MIAI…TTIS, ATGP…FFLL, FAGW…LTAV, WLPG…LTLL, and TEFW…VTGI.

This sequence belongs to the amino acid-polyamine-organocation (APC) superfamily.

The protein resides in the cell membrane. This is an uncharacterized protein from Lactobacillus delbrueckii subsp. lactis.